A 92-amino-acid polypeptide reads, in one-letter code: Large ribosomal subunit protein bL31 (92 aa).

Residues Gly66–Ser92 are disordered. The span at Ala70 to Lys80 shows a compositional bias: low complexity.

Belongs to the bacterial ribosomal protein bL31 family. Type A subfamily. As to quaternary structure, part of the 50S ribosomal subunit.

Binds the 23S rRNA. In Synechococcus sp. (strain RCC307), this protein is Large ribosomal subunit protein bL31.